We begin with the raw amino-acid sequence, 141 residues long: Large ribosomal subunit protein uL11 (141 aa).

It belongs to the universal ribosomal protein uL11 family. Part of the ribosomal stalk of the 50S ribosomal subunit. Interacts with L10 and the large rRNA to form the base of the stalk. L10 forms an elongated spine to which L12 dimers bind in a sequential fashion forming a multimeric L10(L12)X complex. In terms of processing, one or more lysine residues are methylated.

Functionally, forms part of the ribosomal stalk which helps the ribosome interact with GTP-bound translation factors. The chain is Large ribosomal subunit protein uL11 from Chlamydia trachomatis serovar L2 (strain ATCC VR-902B / DSM 19102 / 434/Bu).